Reading from the N-terminus, the 541-residue chain is GTPase Obg (541 aa).

One can recognise an Obg domain in the interval 2-159 (PTFVDRVVLH…LDAVLELKSV (158 aa)). Positions 63–84 (HPHQRAGGGRPGQGSNRHGADG) are disordered. The OBG-type G domain occupies 160–332 (ADVALVGFPS…LALALAELVA (173 aa)). GTP is bound by residues 166 to 173 (GFPSAGKS), 191 to 195 (FTTLV), 213 to 216 (DVPG), 284 to 287 (NKVD), and 313 to 315 (STA). Residues Ser-173 and Thr-193 each coordinate Mg(2+). Positions 350 to 427 (PRAVDEPDFT…IGAVTFDWEP (78 aa)) constitute an OCT domain. Residues 497-541 (KRLTRAQRTALSDSADDFDDGAGFSDSAAFGDSGGSGGDADGGRG) form a disordered region. Residues 517–527 (GAGFSDSAAFG) show a composition bias toward low complexity. Residues 528 to 541 (DSGGSGGDADGGRG) show a composition bias toward gly residues.

The protein belongs to the TRAFAC class OBG-HflX-like GTPase superfamily. OBG GTPase family. Monomer. Mg(2+) is required as a cofactor.

Its subcellular location is the cytoplasm. An essential GTPase which binds GTP, GDP and possibly (p)ppGpp with moderate affinity, with high nucleotide exchange rates and a fairly low GTP hydrolysis rate. Plays a role in control of the cell cycle, stress response, ribosome biogenesis and in those bacteria that undergo differentiation, in morphogenesis control. In Parafrankia sp. (strain EAN1pec), this protein is GTPase Obg.